A 517-amino-acid polypeptide reads, in one-letter code: Lysophosphatidylcholine acyltransferase 2B (517 aa).

N29 carries N-linked (GlcNAc...) asparagine glycosylation. The next 3 helical transmembrane spans lie at 70-90 (IVFL…NLPI), 103-123 (LIKP…GFLI), and 137-157 (IFVV…VAGL). The HXXXXD motif motif lies at 143-148 (HSTFFD). EF-hand domains are found at residues 388 to 423 (PISE…LCNP) and 425 to 460 (NTEK…AFGV). Positions 401, 403, 405, 407, 412, 438, 440, 442, 444, and 449 each coordinate Ca(2+).

Belongs to the 1-acyl-sn-glycerol-3-phosphate acyltransferase family.

The protein resides in the membrane. Its pathway is lipid metabolism; phospholipid metabolism. Functionally, probable acetyltransferase. In Rattus norvegicus (Rat), this protein is Lysophosphatidylcholine acyltransferase 2B (Lpcat2b).